Reading from the N-terminus, the 525-residue chain is GMP synthase [glutamine-hydrolyzing] (525 aa).

In terms of domain architecture, Glutamine amidotransferase type-1 spans 9–207 (RILILDFGSQ…VRDICQCEAL (199 aa)). Residue Cys-86 is the Nucleophile of the active site. Catalysis depends on residues His-181 and Glu-183. In terms of domain architecture, GMPS ATP-PPase spans 208 to 400 (WTPAKIIDDA…LGLPYDMLYR (193 aa)). Residue 235-241 (SGGVDSS) participates in ATP binding.

As to quaternary structure, homodimer.

It carries out the reaction XMP + L-glutamine + ATP + H2O = GMP + L-glutamate + AMP + diphosphate + 2 H(+). The protein operates within purine metabolism; GMP biosynthesis; GMP from XMP (L-Gln route): step 1/1. Its function is as follows. Catalyzes the synthesis of GMP from XMP. The protein is GMP synthase [glutamine-hydrolyzing] of Shigella boydii serotype 18 (strain CDC 3083-94 / BS512).